The chain runs to 156 residues: Small ribosomal subunit protein uS7 (156 aa).

The protein belongs to the universal ribosomal protein uS7 family. As to quaternary structure, part of the 30S ribosomal subunit. Contacts proteins S9 and S11.

In terms of biological role, one of the primary rRNA binding proteins, it binds directly to 16S rRNA where it nucleates assembly of the head domain of the 30S subunit. Is located at the subunit interface close to the decoding center, probably blocks exit of the E-site tRNA. In Thermosynechococcus vestitus (strain NIES-2133 / IAM M-273 / BP-1), this protein is Small ribosomal subunit protein uS7.